A 274-amino-acid polypeptide reads, in one-letter code: 2,3,4,5-tetrahydropyridine-2,6-dicarboxylate N-succinyltransferase (274 aa).

Residues arginine 104 and aspartate 141 each contribute to the substrate site.

This sequence belongs to the transferase hexapeptide repeat family. Homotrimer.

It is found in the cytoplasm. It carries out the reaction (S)-2,3,4,5-tetrahydrodipicolinate + succinyl-CoA + H2O = (S)-2-succinylamino-6-oxoheptanedioate + CoA. Its pathway is amino-acid biosynthesis; L-lysine biosynthesis via DAP pathway; LL-2,6-diaminopimelate from (S)-tetrahydrodipicolinate (succinylase route): step 1/3. This Salmonella arizonae (strain ATCC BAA-731 / CDC346-86 / RSK2980) protein is 2,3,4,5-tetrahydropyridine-2,6-dicarboxylate N-succinyltransferase.